A 397-amino-acid chain; its full sequence is Phosphoglycerate kinase (397 aa).

Substrate is bound by residues 21-23, R36, 59-62, R118, and R151; these read DFN and HLGR. ATP contacts are provided by residues K202, G293, E324, and 353–356; that span reads GGDS.

The protein belongs to the phosphoglycerate kinase family. Monomer.

It is found in the cytoplasm. The enzyme catalyses (2R)-3-phosphoglycerate + ATP = (2R)-3-phospho-glyceroyl phosphate + ADP. It participates in carbohydrate degradation; glycolysis; pyruvate from D-glyceraldehyde 3-phosphate: step 2/5. This Chloroherpeton thalassium (strain ATCC 35110 / GB-78) protein is Phosphoglycerate kinase.